Consider the following 475-residue polypeptide: Probable proline--tRNA ligase, mitochondrial (475 aa).

A mitochondrion-targeting transit peptide spans 1–29; it reads MEGLLTRCRTLSALAACSLRHCRYIIHKC.

Belongs to the class-II aminoacyl-tRNA synthetase family.

It localises to the mitochondrion matrix. It catalyses the reaction tRNA(Pro) + L-proline + ATP = L-prolyl-tRNA(Pro) + AMP + diphosphate. Functionally, mitochondrial aminoacyl-tRNA synthetase that catalyzes the specific attachment of the proline amino acid (aa) to the homologous transfer RNA (tRNA), further participating in protein synthesis. The reaction occurs in a two steps: proline is first activated by ATP to form Pro-AMP and then transferred to the acceptor end of tRNA(Pro). This Mus musculus (Mouse) protein is Probable proline--tRNA ligase, mitochondrial (Pars2).